The primary structure comprises 400 residues: Large envelope protein (400 aa).

At M1 the chain carries N-acetylmethionine. 2 disordered regions span residues 1–50 (MGGW…PHKD) and 84–116 (ILTS…RDTH). G2 carries N-myristoyl glycine; by host lipidation. A pre-S1 region spans residues 2 to 119 (GGWSSKPRKG…PPLRDTHPQA (118 aa)). The pre-S stretch occupies residues 2 to 174 (GGWSSKPRKG…LSTTGDPVPN (173 aa)). The Virion surface; in external conformation portion of the chain corresponds to 2-181 (GGWSSKPRKG…VPNMENIASG (180 aa)). Residues 2 to 253 (GGWSSKPRKG…PGYRWMYLRR (252 aa)) lie on the Intravirion; in internal conformation side of the membrane. The N-linked (GlcNAc...) asparagine glycan is linked to W4. Residues 96–106 (STNRQSGRQPT) show a composition bias toward polar residues. Residues 120–174 (MQWNSTTFHQTLQDPRVRALYLPAGGSSSGTVSPAQNTVSAISSILSTTGDPVPN) are pre-S2. A helical membrane pass occupies residues 182-202 (LLGPLLVLQAGFFSLTKILTI). Residues 203–253 (PQSLDSWWTSLSFLGGTPVCLGQNSQSPISSHSPTCCPPICPGYRWMYLRR) are Intravirion; in external conformation-facing. Residues 254 to 274 (FIIXLCILLLCLIFLLVLLDY) form a helical membrane-spanning segment. At 275–348 (QGMLPVCPLI…WASVRFSWLS (74 aa)) the chain is on the virion surface side. A glycan (N-linked (GlcNAc...) asparagine; by host) is linked at N320. Residues 349–369 (LLVPFVQWFVGLSPTVWLSVI) traverse the membrane as a helical segment. The Intravirion portion of the chain corresponds to 370-375 (WMMWYW). Residues 376-398 (GPSLYNILSPFMPLLPIFFCLWV) traverse the membrane as a helical segment. Over 399–400 (YI) the chain is Virion surface.

This sequence belongs to the orthohepadnavirus major surface antigen family. In terms of assembly, interacts (via its myristoylated pre-S1 region) with the host SLC10A1/NTCP; this interaction is essential for viral entry. As to quaternary structure, in its internal form (Li-HBsAg), interacts with the capsid protein and with the isoform S. Interacts with host chaperone CANX. Associates with host chaperone CANX through its pre-S2 N glycan; this association may be essential for isoform M proper secretion. In terms of assembly, interacts with isoform L. Interacts with the antigens of satellite virus HDV (HDVAgs); this interaction is required for encapsidation of HDV genomic RNA. Isoform M is N-terminally acetylated by host at a ratio of 90%, and N-glycosylated by host at the pre-S2 region. Post-translationally, myristoylated; this modification is essential for its interaction with the host protein SLC10A1/NTCP.

It is found in the virion membrane. In terms of biological role, the large envelope protein exists in two topological conformations, one which is termed 'external' or Le-HBsAg and the other 'internal' or Li-HBsAg. In its external conformation the protein attaches the virus to cell receptors and thereby initiating infection. This interaction determines the species specificity and liver tropism. This attachment induces virion internalization predominantly through caveolin-mediated endocytosis. The large envelope protein also assures fusion between virion membrane and endosomal membrane. In its internal conformation the protein plays a role in virion morphogenesis and mediates the contact with the nucleocapsid like a matrix protein. Its function is as follows. The middle envelope protein plays an important role in the budding of the virion. It is involved in the induction of budding in a nucleocapsid independent way. In this process the majority of envelope proteins bud to form subviral lipoprotein particles of 22 nm of diameter that do not contain a nucleocapsid. The protein is Large envelope protein of Hepatitis B virus genotype B1 (isolate Japan/Ry30/2002) (HBV-B).